Consider the following 358-residue polypeptide: uncharacterized protein (358 aa).

The tract at residues Asp-324–Asp-358 is disordered. Basic residues predominate over residues Asn-348 to Asp-358.

This is an uncharacterized protein from Mycoplasma pneumoniae (strain ATCC 29342 / M129 / Subtype 1) (Mycoplasmoides pneumoniae).